An 813-amino-acid polypeptide reads, in one-letter code: Lon protease (813 aa).

Residues 30-225 (LPILPVRNIV…WLLQLMDKDI (196 aa)) enclose the Lon N-terminal domain. 376–383 (GPPGVGKT) contacts ATP. A Lon proteolytic domain is found at 612 to 793 (DDLAGIVTGL…DEVLAIALLK (182 aa)). Residues Ser699 and Lys742 contribute to the active site.

Belongs to the peptidase S16 family. In terms of assembly, homohexamer. Organized in a ring with a central cavity.

The protein localises to the cytoplasm. It catalyses the reaction Hydrolysis of proteins in presence of ATP.. In terms of biological role, ATP-dependent serine protease that mediates the selective degradation of mutant and abnormal proteins as well as certain short-lived regulatory proteins. Required for cellular homeostasis and for survival from DNA damage and developmental changes induced by stress. Degrades polypeptides processively to yield small peptide fragments that are 5 to 10 amino acids long. Binds to DNA in a double-stranded, site-specific manner. The protein is Lon protease of Cytophaga hutchinsonii (strain ATCC 33406 / DSM 1761 / CIP 103989 / NBRC 15051 / NCIMB 9469 / D465).